The primary structure comprises 92 residues: Small ribosomal subunit protein uS19c (92 aa).

It belongs to the universal ribosomal protein uS19 family.

Its subcellular location is the plastid. It is found in the chloroplast. Protein S19 forms a complex with S13 that binds strongly to the 16S ribosomal RNA. This Nymphaea alba (White water-lily) protein is Small ribosomal subunit protein uS19c.